The sequence spans 460 residues: Exodeoxyribonuclease 7 large subunit (460 aa).

Positions 438 to 460 (ARVEKVNREEEKQSGSQKNGTRD) are disordered. Residues 439–450 (RVEKVNREEEKQ) show a composition bias toward basic and acidic residues. The segment covering 451-460 (SGSQKNGTRD) has biased composition (polar residues).

The protein belongs to the XseA family. In terms of assembly, heterooligomer composed of large and small subunits.

It is found in the cytoplasm. It catalyses the reaction Exonucleolytic cleavage in either 5'- to 3'- or 3'- to 5'-direction to yield nucleoside 5'-phosphates.. Its function is as follows. Bidirectionally degrades single-stranded DNA into large acid-insoluble oligonucleotides, which are then degraded further into small acid-soluble oligonucleotides. This chain is Exodeoxyribonuclease 7 large subunit, found in Brevibacillus brevis (strain 47 / JCM 6285 / NBRC 100599).